A 483-amino-acid chain; its full sequence is Threonine synthase-like 2 (483 aa).

Position 113 is an N6-(pyridoxal phosphate)lysine (Lys113).

It belongs to the threonine synthase family. Requires pyridoxal 5'-phosphate as cofactor.

Its function is as follows. Acts as a catabolic phospho-lyase on both gamma- and beta-phosphorylated substrates. Degrades O-phospho-threonine (PThr) to alpha-ketobutyrate, ammonia and phosphate. Also degrades O-phospho-homoserine (PHS), but this is not its physiological substrate. The chain is Threonine synthase-like 2 (Thnsl2) from Mus musculus (Mouse).